The chain runs to 114 residues: FK506-binding protein 1 (114 aa).

One can recognise a PPIase FKBP-type domain in the interval 26 to 114; it reads GDLVTIHYTG…IFDVELLKVN (89 aa).

The protein belongs to the FKBP-type PPIase family. FKBP1 subfamily.

Its subcellular location is the cytoplasm. It carries out the reaction [protein]-peptidylproline (omega=180) = [protein]-peptidylproline (omega=0). Inhibited by both FK506 and rapamycin. Its function is as follows. PPIases accelerate the folding of proteins. It catalyzes the cis-trans isomerization of proline imidic peptide bonds in oligopeptides. This is FK506-binding protein 1 (FPR1) from Candida glabrata (strain ATCC 2001 / BCRC 20586 / JCM 3761 / NBRC 0622 / NRRL Y-65 / CBS 138) (Yeast).